Here is a 226-residue protein sequence, read N- to C-terminus: PKHD-type hydroxylase PP_0862 (226 aa).

In terms of domain architecture, Fe2OG dioxygenase spans 78-178; the sequence is KVFPPLINCY…RYAAFFWTQS (101 aa). Fe cation is bound by residues H96, D98, and H159. Residue R169 coordinates 2-oxoglutarate.

Requires Fe(2+) as cofactor. L-ascorbate serves as cofactor.

The polypeptide is PKHD-type hydroxylase PP_0862 (Pseudomonas putida (strain ATCC 47054 / DSM 6125 / CFBP 8728 / NCIMB 11950 / KT2440)).